Consider the following 204-residue polypeptide: dITP/XTP pyrophosphatase (204 aa).

Position 8-13 (8-13 (SNNAKK)) interacts with substrate. 2 residues coordinate Mg(2+): Glu43 and Asp72. The active-site Proton acceptor is the Asp72. Residues Ser73, 155-158 (FGYD), Lys180, and 185-186 (HR) each bind substrate.

Belongs to the HAM1 NTPase family. Homodimer. Mg(2+) serves as cofactor.

It catalyses the reaction XTP + H2O = XMP + diphosphate + H(+). It carries out the reaction dITP + H2O = dIMP + diphosphate + H(+). The catalysed reaction is ITP + H2O = IMP + diphosphate + H(+). In terms of biological role, pyrophosphatase that catalyzes the hydrolysis of nucleoside triphosphates to their monophosphate derivatives, with a high preference for the non-canonical purine nucleotides XTP (xanthosine triphosphate), dITP (deoxyinosine triphosphate) and ITP. Seems to function as a house-cleaning enzyme that removes non-canonical purine nucleotides from the nucleotide pool, thus preventing their incorporation into DNA/RNA and avoiding chromosomal lesions. This Cutibacterium acnes (strain DSM 16379 / KPA171202) (Propionibacterium acnes) protein is dITP/XTP pyrophosphatase.